We begin with the raw amino-acid sequence, 255 residues long: Probable UDP-N-acetylglucosamine pyrophosphorylase (255 aa).

It catalyses the reaction N-acetyl-alpha-D-glucosamine 1-phosphate + UTP + H(+) = UDP-N-acetyl-alpha-D-glucosamine + diphosphate. Its pathway is nucleotide-sugar biosynthesis; UDP-N-acetyl-alpha-D-glucosamine biosynthesis; UDP-N-acetyl-alpha-D-glucosamine from N-acetyl-alpha-D-glucosamine 1-phosphate: step 1/1. This Acanthamoeba polyphaga (Amoeba) protein is Probable UDP-N-acetylglucosamine pyrophosphorylase.